Consider the following 93-residue polypeptide: Integration host factor subunit beta (93 aa).

This sequence belongs to the bacterial histone-like protein family. In terms of assembly, heterodimer of an alpha and a beta chain.

Functionally, this protein is one of the two subunits of integration host factor, a specific DNA-binding protein that functions in genetic recombination as well as in transcriptional and translational control. This chain is Integration host factor subunit beta, found in Cereibacter sphaeroides (strain KD131 / KCTC 12085) (Rhodobacter sphaeroides).